The sequence spans 786 residues: MLGARAWLGRVLLLPRAGAGLAASRRGSSSRDKDRSATVSSSVPMPAGGKGSHPSSTPQRVPNRLIHEKSPYLLQHAYNPVDWYPWGQEAFDKARKENKPIFLSVGYSTCHWCHMMEEESFQNEEIGRLLSEDFVSVKVDREERPDVDKVYMTFVQATSSGGGWPMNVWLTPNLQPFVGGTYFPPEDGLTRVGFRTVLLRIREQWKQNKNTLLENSQRVTTALLARSEISVGDRQLPPSAATVNNRCFQQLDEGYDEEYGGFAEAPKFPTPVILSFLFSYWLSHRLTQDGSRAQQMALHTLKMMANGGIRDHVGQGFHRYSTDRQWHVPHFEKMLYDQAQLAVAYSQAFQLSGDEFYSDVAKGILQYVARSLSHRSGGFYSAEDADSPPERGQRPKEGAYYVWTVKEVQQLLPEPVLGATEPLTSGQLLMKHYGLTEAGNISPSQDPKGELQGQNVLTVRYSLELTAARFGLDVEAVRTLLNSGLEKLFQARKHRPKPHLDSKMLAAWNGLMVSGYAVTGAVLGQDRLINYATNGAKFLKRHMFDVASGRLMRTCYTGPGGTVEHSNPPCWGFLEDYAFVVRGLLDLYEASQESAWLEWALRLQDTQDKLFWDSQGGGYFCSEAELGAGLPLRLKDDQDGAEPSANSVSAHNLLRLHGFTGHKDWMDKCVCLLTAFSERMRRVPVALPEMVRALSAQQQTLKQIVICGDRQAKDTKALVQCVHSVYIPNKVLILADGDPSSFLSRQLPFLSTLRRLEDQATAYVCENQACSVPITDPCELRKLLHP.

The signal sequence occupies residues Met1–Ala22. The interval Ala23 to Val61 is disordered. At Ser649 the chain carries Phosphoserine.

The protein resides in the secreted. Functionally, may play a role in fertility regulation. This chain is Spermatogenesis-associated protein 20 (SPATA20), found in Homo sapiens (Human).